The following is a 302-amino-acid chain: Aspartate carbamoyltransferase catalytic subunit (302 aa).

2 residues coordinate carbamoyl phosphate: R53 and T54. K82 is a binding site for L-aspartate. The carbamoyl phosphate site is built by R103, H131, and Q134. Positions 164 and 223 each coordinate L-aspartate. Carbamoyl phosphate is bound by residues L260 and P261.

It belongs to the aspartate/ornithine carbamoyltransferase superfamily. ATCase family. Heterooligomer of catalytic and regulatory chains.

It catalyses the reaction carbamoyl phosphate + L-aspartate = N-carbamoyl-L-aspartate + phosphate + H(+). The protein operates within pyrimidine metabolism; UMP biosynthesis via de novo pathway; (S)-dihydroorotate from bicarbonate: step 2/3. In terms of biological role, catalyzes the condensation of carbamoyl phosphate and aspartate to form carbamoyl aspartate and inorganic phosphate, the committed step in the de novo pyrimidine nucleotide biosynthesis pathway. The polypeptide is Aspartate carbamoyltransferase catalytic subunit (Methanococcus maripaludis (strain C5 / ATCC BAA-1333)).